Reading from the N-terminus, the 102-residue chain is MSDQATTLKIKPLGDRILVKREEEASTARGGIILPDTAKKKQDRAEVVALGTGKKDDKGQQLPFEVQVGDIVLIDKYSGQELTVEGEEYVIVQMSEVIAVLQ.

Belongs to the GroES chaperonin family. As to quaternary structure, heptamer of 7 subunits arranged in a ring. Interacts with the chaperonin GroEL.

Its subcellular location is the cytoplasm. Its function is as follows. Together with the chaperonin GroEL, plays an essential role in assisting protein folding. The GroEL-GroES system forms a nano-cage that allows encapsulation of the non-native substrate proteins and provides a physical environment optimized to promote and accelerate protein folding. GroES binds to the apical surface of the GroEL ring, thereby capping the opening of the GroEL channel. This Chlamydia trachomatis serovar L2 (strain ATCC VR-902B / DSM 19102 / 434/Bu) protein is Co-chaperonin GroES.